A 325-amino-acid chain; its full sequence is Aldo-keto reductase family 1 member D1 (325 aa).

Residues 22-26 (GLGTY) and Asp-52 contribute to the NADP(+) site. Residue Tyr-26 participates in substrate binding. Residues Tyr-57, Trp-88, Glu-119, and Tyr-131 each contribute to the substrate site. Residue Tyr-57 is the Proton donor of the active site. NADP(+) contacts are provided by residues 168 to 169 (SN), Gln-192, and 218 to 223 (HSPLGT). Phosphoserine is present on Ser-228. A substrate-binding site is contributed by Trp-229. An NADP(+)-binding site is contributed by 272–282 (KSFTPERIKEN).

This sequence belongs to the aldo/keto reductase family.

It is found in the cytoplasm. It carries out the reaction 5beta-cholestan-3-one + NADP(+) = cholest-4-en-3-one + NADPH + H(+). It catalyses the reaction 4,5beta-dihydrocortisone + NADP(+) = cortisone + NADPH + H(+). The catalysed reaction is cortisol + NADPH + H(+) = 5beta-dihydrocortisol + NADP(+). The enzyme catalyses corticosterone + NADPH + H(+) = 5beta-dihydrocorticosterone + NADP(+). It carries out the reaction 7alpha,12alpha-dihydroxycholest-4-en-3-one + NADPH + H(+) = 7alpha,12alpha-dihydroxy-5beta-cholestan-3-one + NADP(+). It catalyses the reaction 7alpha-hydroxycholest-4-en-3-one + NADPH + H(+) = 7alpha-hydroxy-5beta-cholestan-3-one + NADP(+). The catalysed reaction is epitestosterone + NADPH + H(+) = 5beta-dihydroepitestosterone + NADP(+). The enzyme catalyses androst-4-ene-3,17-dione + NADPH + H(+) = 5beta-androstane-3,17-dione + NADP(+). It carries out the reaction progesterone + NADPH + H(+) = 5beta-pregnan-3,20-dione + NADP(+). It catalyses the reaction 21-hydroxyprogesterone + NADPH + H(+) = 5beta-dihydrodeoxycorticosterone + NADP(+). The catalysed reaction is aldosterone + NADPH + H(+) = 5beta-dihydroaldosterone + NADP(+). The enzyme catalyses 17beta-hydroxyandrosta-1,4-dien-3-one + NADPH + H(+) = 17beta-hydroxy-5beta-androst-1-en-3-one + NADP(+). It carries out the reaction 17beta-hydroxyestr-4-en-3-one + NADPH + H(+) = 17beta-hydroxy-5beta-estran-3-one + NADP(+). It catalyses the reaction 5beta-dihydrotestosterone + NADP(+) = testosterone + NADPH + H(+). The catalysed reaction is androst-4-ene-3,11,17-trione + NADPH + H(+) = 17beta-hydroxyandrost-4-ene-3,11-dione + NADP(+). Its activity is regulated as follows. Subject to inhibition by high substrate concentrations. Inhibited by testosterone concentrations above 10 uM. Inhibited by the primary and secondary bile acids chenodeoxycholic acid and ursodeoxycholic acid. Its function is as follows. Catalyzes the stereospecific NADPH-dependent reduction of the C4-C5 double bond of bile acid intermediates and steroid hormones carrying a delta(4)-3-one structure to yield an A/B cis-ring junction. This cis-configuration is crucial for bile acid biosynthesis and plays important roles in steroid metabolism. Capable of reducing a broad range of delta-(4)-3-ketosteroids from C18 (such as, 17beta-hydroxyestr-4-en-3-one) to C27 (such as, 7alpha-hydroxycholest-4-en-3-one). This is Aldo-keto reductase family 1 member D1 (Akr1d1) from Mus musculus (Mouse).